We begin with the raw amino-acid sequence, 428 residues long: C4-dicarboxylate transport protein (428 aa).

Transmembrane regions (helical) follow at residues 8–28 (SLYF…HFYP), 44–64 (LIKM…IAGM), 76–96 (VALL…LIIV), 142–162 (IGAF…LFGF), 184–206 (VIFG…AMAF), 222–242 (LIIC…GSIA), 326–346 (IVHQ…AAGV), and 352–372 (IVLA…LALI).

This sequence belongs to the dicarboxylate/amino acid:cation symporter (DAACS) (TC 2.A.23) family.

Its subcellular location is the cell inner membrane. Responsible for the transport of dicarboxylates such as succinate, fumarate, and malate from the periplasm across the membrane. In Shigella flexneri, this protein is C4-dicarboxylate transport protein.